The chain runs to 353 residues: Transcription termination/antitermination protein NusG (353 aa).

One can recognise a KOW domain in the interval 301-335 (VGDMVKIISGPFEDFAGVIKEIDPERQELKVNVTI).

It belongs to the NusG family.

With respect to regulation, regulated by autoinhibition via interaction of the N-terminal and the C-terminal domains. Autoinhibition may prevent NusG from interacting prematurely with other components of the transcription complex or non-specific interactions with other cellular components. Functionally, participates in transcription elongation, termination and antitermination. The polypeptide is Transcription termination/antitermination protein NusG (Thermotoga maritima (strain ATCC 43589 / DSM 3109 / JCM 10099 / NBRC 100826 / MSB8)).